We begin with the raw amino-acid sequence, 580 residues long: Formate--tetrahydrofolate ligase (580 aa).

83-90 (TPMGEGKT) serves as a coordination point for ATP.

It belongs to the formate--tetrahydrofolate ligase family.

It catalyses the reaction (6S)-5,6,7,8-tetrahydrofolate + formate + ATP = (6R)-10-formyltetrahydrofolate + ADP + phosphate. It participates in one-carbon metabolism; tetrahydrofolate interconversion. The chain is Formate--tetrahydrofolate ligase from Haloquadratum walsbyi (strain DSM 16790 / HBSQ001).